A 114-amino-acid polypeptide reads, in one-letter code: Ribosome-binding factor A (114 aa).

This sequence belongs to the RbfA family. Monomer. Binds 30S ribosomal subunits, but not 50S ribosomal subunits or 70S ribosomes.

It is found in the cytoplasm. Functionally, one of several proteins that assist in the late maturation steps of the functional core of the 30S ribosomal subunit. Associates with free 30S ribosomal subunits (but not with 30S subunits that are part of 70S ribosomes or polysomes). Required for efficient processing of 16S rRNA. May interact with the 5'-terminal helix region of 16S rRNA. The sequence is that of Ribosome-binding factor A from Listeria innocua serovar 6a (strain ATCC BAA-680 / CLIP 11262).